Consider the following 320-residue polypeptide: Lipoyl synthase (320 aa).

[4Fe-4S] cluster is bound by residues Cys67, Cys72, Cys78, Cys93, Cys97, Cys100, and Ser307. The Radical SAM core domain maps to 79–296 (FNHGTATFMI…RDKAQAMGFE (218 aa)).

It belongs to the radical SAM superfamily. Lipoyl synthase family. Requires [4Fe-4S] cluster as cofactor.

It is found in the cytoplasm. The enzyme catalyses [[Fe-S] cluster scaffold protein carrying a second [4Fe-4S](2+) cluster] + N(6)-octanoyl-L-lysyl-[protein] + 2 oxidized [2Fe-2S]-[ferredoxin] + 2 S-adenosyl-L-methionine + 4 H(+) = [[Fe-S] cluster scaffold protein] + N(6)-[(R)-dihydrolipoyl]-L-lysyl-[protein] + 4 Fe(3+) + 2 hydrogen sulfide + 2 5'-deoxyadenosine + 2 L-methionine + 2 reduced [2Fe-2S]-[ferredoxin]. It participates in protein modification; protein lipoylation via endogenous pathway; protein N(6)-(lipoyl)lysine from octanoyl-[acyl-carrier-protein]: step 2/2. Catalyzes the radical-mediated insertion of two sulfur atoms into the C-6 and C-8 positions of the octanoyl moiety bound to the lipoyl domains of lipoate-dependent enzymes, thereby converting the octanoylated domains into lipoylated derivatives. This Pasteurella multocida (strain Pm70) protein is Lipoyl synthase.